Reading from the N-terminus, the 270-residue chain is 4-hydroxy-tetrahydrodipicolinate reductase (270 aa).

NAD(+) is bound by residues 9 to 14 (GAGGRM) and Glu-35. Position 36 (Arg-36) interacts with NADP(+). NAD(+) is bound by residues 99–101 (GTT) and 123–126 (ASNY). The Proton donor/acceptor role is filled by His-156. His-157 contacts (S)-2,3,4,5-tetrahydrodipicolinate. The Proton donor role is filled by Lys-160. 166 to 167 (GT) is a (S)-2,3,4,5-tetrahydrodipicolinate binding site.

It belongs to the DapB family.

It localises to the cytoplasm. The enzyme catalyses (S)-2,3,4,5-tetrahydrodipicolinate + NAD(+) + H2O = (2S,4S)-4-hydroxy-2,3,4,5-tetrahydrodipicolinate + NADH + H(+). It catalyses the reaction (S)-2,3,4,5-tetrahydrodipicolinate + NADP(+) + H2O = (2S,4S)-4-hydroxy-2,3,4,5-tetrahydrodipicolinate + NADPH + H(+). It participates in amino-acid biosynthesis; L-lysine biosynthesis via DAP pathway; (S)-tetrahydrodipicolinate from L-aspartate: step 4/4. Catalyzes the conversion of 4-hydroxy-tetrahydrodipicolinate (HTPA) to tetrahydrodipicolinate. This Actinobacillus succinogenes (strain ATCC 55618 / DSM 22257 / CCUG 43843 / 130Z) protein is 4-hydroxy-tetrahydrodipicolinate reductase.